The chain runs to 228 residues: Cytidylate kinase (228 aa).

17–25 (GPTASGKGT) lines the ATP pocket.

Belongs to the cytidylate kinase family. Type 1 subfamily.

The protein localises to the cytoplasm. It carries out the reaction CMP + ATP = CDP + ADP. The enzyme catalyses dCMP + ATP = dCDP + ADP. The sequence is that of Cytidylate kinase from Burkholderia ambifaria (strain ATCC BAA-244 / DSM 16087 / CCUG 44356 / LMG 19182 / AMMD) (Burkholderia cepacia (strain AMMD)).